The chain runs to 511 residues: Maturase K (511 aa).

It belongs to the intron maturase 2 family. MatK subfamily.

The protein localises to the plastid. It localises to the chloroplast. Usually encoded in the trnK tRNA gene intron. Probably assists in splicing its own and other chloroplast group II introns. The protein is Maturase K of Hordeum bulbosum (Bulbous barley).